A 121-amino-acid polypeptide reads, in one-letter code: Cu-Zn superoxide dismutase-like protein (121 aa).

A disulfide bridge connects residues C48 and C98.

The protein belongs to the Cu-Zn superoxide dismutase family.

The protein localises to the host cytoplasm. Functionally, virion protein with no enzymatic activity. This chain is Cu-Zn superoxide dismutase-like protein, found in Vaccinia virus (strain Ankara) (VACV).